Here is a 161-residue protein sequence, read N- to C-terminus: Transcriptional repressor NrdR (161 aa).

The segment at 3 to 34 (CPFCGKYDTKVTDSRLVAEGDQVRRRRQCNDC) is a zinc-finger region. An ATP-cone domain is found at 49 to 139 (PRVIKGDGSR…VYRRFQDLDE (91 aa)).

It belongs to the NrdR family. Requires Zn(2+) as cofactor.

Functionally, negatively regulates transcription of bacterial ribonucleotide reductase nrd genes and operons by binding to NrdR-boxes. In Chromohalobacter salexigens (strain ATCC BAA-138 / DSM 3043 / CIP 106854 / NCIMB 13768 / 1H11), this protein is Transcriptional repressor NrdR.